The sequence spans 443 residues: Methyl-coenzyme M reductase I subunit beta (443 aa).

Tyrosine 367 contributes to the coenzyme M binding site. Glycine 369 lines the coenzyme B pocket.

It belongs to the methyl-coenzyme M reductase beta subunit family. MCR is a hexamer of two alpha, two beta, and two gamma chains, forming a dimer of heterotrimers. Coenzyme F430 is required as a cofactor.

It localises to the cytoplasm. The enzyme catalyses coenzyme B + methyl-coenzyme M = methane + coenzyme M-coenzyme B heterodisulfide. It participates in one-carbon metabolism; methyl-coenzyme M reduction; methane from methyl-coenzyme M: step 1/1. Methyl-coenzyme M reductase activity is inhibited by 3-nitrooxypropanol (3-NOP) in vitro and in vivo, by oxidation of its active site Ni(I), which stops both growth and methanogenesis. Is also inhibited by the reaction product CoM-S-S-CoB. Its function is as follows. Component of the methyl-coenzyme M reductase (MCR) I that catalyzes the reductive cleavage of methyl-coenzyme M (CoM-S-CH3 or 2-(methylthio)ethanesulfonate) using coenzyme B (CoB or 7-mercaptoheptanoylthreonine phosphate) as reductant which results in the production of methane and the mixed heterodisulfide of CoB and CoM (CoM-S-S-CoB). This is the final step in methanogenesis. Neither N-6-mercaptohexanoylthreonine phosphate (H-S-HxoTP) nor N-8-mercaptooctanoylthreonine phosphate (H-SOcoTP) nor any other thiol compound such as CoA or CoM can substitute for CoB as the electron donor. The sequence is that of Methyl-coenzyme M reductase I subunit beta (mcrB) from Methanothermobacter marburgensis (strain ATCC BAA-927 / DSM 2133 / JCM 14651 / NBRC 100331 / OCM 82 / Marburg) (Methanobacterium thermoautotrophicum).